The primary structure comprises 58 residues: Small ribosomal subunit protein bS21 (58 aa).

It belongs to the bacterial ribosomal protein bS21 family.

The polypeptide is Small ribosomal subunit protein bS21 (Lacticaseibacillus paracasei (strain ATCC 334 / BCRC 17002 / CCUG 31169 / CIP 107868 / KCTC 3260 / NRRL B-441) (Lactobacillus paracasei)).